We begin with the raw amino-acid sequence, 196 residues long: ATP-dependent Clp protease proteolytic subunit (196 aa).

Ser-101 acts as the Nucleophile in catalysis. His-126 is an active-site residue.

Belongs to the peptidase S14 family. In terms of assembly, component of the chloroplastic Clp protease core complex.

The protein localises to the plastid. It localises to the chloroplast stroma. The enzyme catalyses Hydrolysis of proteins to small peptides in the presence of ATP and magnesium. alpha-casein is the usual test substrate. In the absence of ATP, only oligopeptides shorter than five residues are hydrolyzed (such as succinyl-Leu-Tyr-|-NHMec, and Leu-Tyr-Leu-|-Tyr-Trp, in which cleavage of the -Tyr-|-Leu- and -Tyr-|-Trp bonds also occurs).. Functionally, cleaves peptides in various proteins in a process that requires ATP hydrolysis. Has a chymotrypsin-like activity. Plays a major role in the degradation of misfolded proteins. This is ATP-dependent Clp protease proteolytic subunit from Vitis vinifera (Grape).